The chain runs to 5255 residues: SCO-spondin (5255 aa).

Positions 1–18 are cleaved as a signal peptide; that stretch reads MGIVATVLLWVVTEAARG. Residues 19–111 enclose the EMI domain; sequence RWCERTEQVT…ACCAGWSGPH (93 aa). 4 N-linked (GlcNAc...) asparagine glycosylation sites follow: asparagine 97, asparagine 136, asparagine 156, and asparagine 255. Positions 192 to 358 constitute a VWFD 1 domain; that stretch reads ASCTVWAGSR…PDANPELSCS (167 aa). Intrachain disulfides connect cysteine 194-cysteine 317 and cysteine 216-cysteine 357. In terms of domain architecture, TIL 1 spans 453-508; sequence CGHGQRYSDCVSSCPASCMAAGTAEEGHCRDDCASGCECTPGLLLDRGACIPQSAC. The VWFC 1 domain maps to 508–601; that stretch reads CPCLHRGHIY…CGGHQPLSCL (94 aa). The VWFD 2 domain occupies 546–717; it reads AECAVLGDLH…NKYRVSTDCP (172 aa). 3 cysteine pairs are disulfide-bonded: cysteine 548–cysteine 681, cysteine 570–cysteine 716, and cysteine 592–cysteine 600. Asparagine 801 carries N-linked (GlcNAc...) asparagine glycosylation. Residues 809 to 868 enclose the TIL 2 domain; it reads CRGGQVYQECSSPCGRTCADLRLDGASSCPSLDNICVSGCNCPEGPVLDDGGQCVPPGVC. A VWFC 2 domain is found at 868–926; the sequence is CPCQHSSQLYPAGSKIRQGCNACMCTAGTWSCTDAPCPDAAFCPGDLVYVFGSCLRTCD. Asparagine 931 and asparagine 972 each carry an N-linked (GlcNAc...) asparagine glycan. In terms of domain architecture, VWFD 3 spans 998 to 1168; it reads GTCVATGDPH…NSWRVSLLCP (171 aa). Intrachain disulfides connect cysteine 1000-cysteine 1132, cysteine 1022-cysteine 1167, and cysteine 1043-cysteine 1050. Residues 1263–1319 enclose the TIL 3 domain; sequence CDGGQEYSACGPPCPQTCRNLGLELPEHCDTMSCLEGCFCPEGKVLHEGSCIDPAEC. A glycan (N-linked (GlcNAc...) asparagine) is linked at asparagine 1340. 6 consecutive LDL-receptor class A domains span residues 1362–1398, 1400–1436, 1439–1477, 1479–1515, 1515–1551, and 1555–1593; these read HCPD…EVCA, HCAP…RGCP, PCAP…AGCS, SCSV…RGCV, VCPA…AFCP, and TCAP…VRCM. 18 disulfides stabilise this stretch: cysteine 1363-cysteine 1376, cysteine 1370-cysteine 1389, cysteine 1383-cysteine 1397, cysteine 1401-cysteine 1413, cysteine 1408-cysteine 1426, cysteine 1420-cysteine 1435, cysteine 1440-cysteine 1452, cysteine 1447-cysteine 1465, cysteine 1459-cysteine 1476, cysteine 1480-cysteine 1492, cysteine 1487-cysteine 1505, cysteine 1499-cysteine 1514, cysteine 1516-cysteine 1528, cysteine 1523-cysteine 1541, cysteine 1535-cysteine 1550, cysteine 1556-cysteine 1568, cysteine 1563-cysteine 1581, and cysteine 1575-cysteine 1592. Asparagine 1610 is a glycosylation site (N-linked (GlcNAc...) asparagine). LDL-receptor class A domains follow at residues 1616–1652, 1654–1693, and 1699–1734; these read VCGP…LGCN, SCVL…DNCG, and PCPG…LACE. Intrachain disulfides connect cysteine 1617-cysteine 1629, cysteine 1624-cysteine 1642, and cysteine 1636-cysteine 1651. Asparagine 1652 is a glycosylation site (N-linked (GlcNAc...) asparagine). Cystine bridges form between cysteine 1655–cysteine 1668, cysteine 1662–cysteine 1681, cysteine 1675–cysteine 1692, cysteine 1700–cysteine 1711, cysteine 1706–cysteine 1724, and cysteine 1718–cysteine 1733. Asparagine 1713 carries N-linked (GlcNAc...) asparagine glycosylation. Asparagine 1743 carries N-linked (GlcNAc...) asparagine glycosylation. An LDL-receptor class A 10 domain is found at 1748–1790; sequence PCAEYSCRDGDCITFKQVCNGLPDCRDGDMASGWLPSDEWDCG. Disulfide bonds link cysteine 1749-cysteine 1759, cysteine 1754-cysteine 1772, cysteine 1766-cysteine 1789, cysteine 1801-cysteine 1837, cysteine 1805-cysteine 1842, and cysteine 1816-cysteine 1827. TSP type-1 domains lie at 1789-1843 and 1845-1903; these read CGQW…TACP and DGAW…DGCP. The N-linked (GlcNAc...) asparagine glycan is linked to asparagine 1856. 3 disulfide bridges follow: cysteine 1857–cysteine 1897, cysteine 1861–cysteine 1902, and cysteine 1871–cysteine 1881. The TIL 4 domain maps to 1907–1961; the sequence is CPGGLQPRPCAPCPASCADLASRAPCRREQCTPGCWCAEGLVLDGERGCVRPREC. 2 consecutive EGF-like domains span residues 1919–1956 and 1957–1983; these read CPAS…RGCV and RPRE…CRLC. The 59-residue stretch at 1961-2019 folds into the VWFC 3 domain; the sequence is CRCEVDGLRYWPGQRMKLNCRLCTCLDGQPRRCRHNPACSVSCSWSAWSPWGECLGPCG. Residues 2002–2058 enclose the TSP type-1 3 domain; it reads SCSWSAWSPWGECLGPCGVQSIQWSFRSPSHPGKHGTNRQCRGIYRKARRCQTEPCQ. 3 disulfide bridges follow: cysteine 2003–cysteine 2042, cysteine 2014–cysteine 2018, and cysteine 2052–cysteine 2057. The VWFC 4 domain maps to 2058-2120; sequence QECEHQGRSR…GKGDSCCFCA (63 aa). N-linked (GlcNAc...) asparagine glycosylation is found at asparagine 2125 and asparagine 2230. 4 disulfide bridges follow: cysteine 2162–cysteine 2310, cysteine 2328–cysteine 2339, cysteine 2335–cysteine 2352, and cysteine 2346–cysteine 2361. Residues 2162–2310 form the F5/8 type C domain; that stretch reads CYSPLGIASL…IFLRAELLGC (149 aa). One can recognise an LDL-receptor class A 11 domain in the interval 2327-2362; sequence PCGTGEFWCGVSCVTASRRCDGATDCPGGADEAGCE. The segment at 2352–2373 is disordered; it reads CPGGADEAGCEPPSSTTLPTHP. Residues 2364 to 2373 are compositionally biased toward polar residues; that stretch reads PSSTTLPTHP. LDL-receptor class A domains lie at 2481–2517 and 2538–2574; these read LCPP…AHCG and TCSP…SSCA. Disulfide bonds link cysteine 2482–cysteine 2494, cysteine 2489–cysteine 2507, cysteine 2501–cysteine 2516, cysteine 2539–cysteine 2551, cysteine 2546–cysteine 2564, cysteine 2558–cysteine 2573, cysteine 2576–cysteine 2612, cysteine 2587–cysteine 2591, cysteine 2622–cysteine 2627, cysteine 2642–cysteine 2679, cysteine 2646–cysteine 2684, and cysteine 2657–cysteine 2669. 2 TSP type-1 domains span residues 2575–2628 and 2630–2685; these read DCIL…RACP and PGAW…QPCG. Residues 2708 to 2750 form the TIL 5 domain; sequence PPCPQVCGDLSATSSCQSPCQEGCRCPPGLFLQEGTCVNASQC. The N-linked (GlcNAc...) asparagine glycan is linked to asparagine 2746. TSP type-1 domains lie at 2790–2844, 2849–2903, and 2905–2958; these read ACAW…TPCA, SSGW…APCP, and AGVW…RPCG. Cystine bridges form between cysteine 2791-cysteine 2829, cysteine 2802-cysteine 2806, cysteine 2839-cysteine 2843, cysteine 2861-cysteine 2897, cysteine 2865-cysteine 2902, cysteine 2881-cysteine 2887, cysteine 2917-cysteine 2952, cysteine 2921-cysteine 2957, and cysteine 2932-cysteine 2942. One can recognise a TIL 6 domain in the interval 2971-3020; the sequence is EECRHSEGRCPWICQDLGAGVACTAQCQPGCHCPAGLLLQNGTCVPPSHC. Asparagine 3011, asparagine 3042, and asparagine 3065 each carry an N-linked (GlcNAc...) asparagine glycan. Positions 3020 to 3077 constitute a VWFC 5 domain; the sequence is CLCHHRGHLYQPGDINALDTCNNCTCVTGQMVCSTETCPVPCTWSNWTAWSTCSHSCD. TSP type-1 domains follow at residues 3060-3115 and 3117-3158; these read PCTW…QPCR and VAPW…APCP. Disulfide bonds link cysteine 3061/cysteine 3099, cysteine 3072/cysteine 3076, and cysteine 3109/cysteine 3114. An N-linked (GlcNAc...) asparagine glycan is attached at asparagine 3136. The 53-residue stretch at 3165 to 3217 folds into the TIL 7 domain; that stretch reads CPPGKQWQACAQGAASCAELSAAPPADGSCHPGCYCPPGALLLNNECVAEAAC. A VWFC 6 domain is found at 3217 to 3275; sequence CPCAVDGVLYQPGDVVPQGCHNCSCIAGRVTNCSQEDCGDVDGPWTPWTPWSECSASCG. Residues asparagine 3238 and asparagine 3248 are each glycosylated (N-linked (GlcNAc...) asparagine). The 52-residue stretch at 3258-3309 folds into the TSP type-1 11 domain; sequence DGPWTPWTPWSECSASCGPGRQRRYRFCSAHPGVPCAEPQPQERPCARQPCH. 3 disulfides stabilise this stretch: cysteine 3270–cysteine 3303, cysteine 3274–cysteine 3308, and cysteine 3285–cysteine 3293. N-linked (GlcNAc...) asparagine glycans are attached at residues asparagine 3350, asparagine 3366, and asparagine 3392. 2 consecutive TSP type-1 domains span residues 3410 to 3475 and 3477 to 3532; these read PGAW…PPCP and DGAW…SSCP. Intrachain disulfides connect cysteine 3422–cysteine 3468, cysteine 3426–cysteine 3474, cysteine 3437–cysteine 3449, cysteine 3489–cysteine 3524, cysteine 3492–cysteine 3531, and cysteine 3502–cysteine 3514. Residues 3534-3589 form the TIL 8 domain; it reads CAGGLVAFTCGKPCPHSCEDLREDTACMATPRCLPACACPHGQLLQDGDCVPPELC. N-linked (GlcNAc...) asparagine glycans are attached at residues asparagine 3598 and asparagine 3625. 2 TSP type-1 domains span residues 3644–3700 and 3702–3751; these read DGGW…EGCP and EEPW…HVCR. Disulfide bonds link cysteine 3656–cysteine 3693, cysteine 3660–cysteine 3699, cysteine 3671–cysteine 3683, cysteine 3714–cysteine 3745, cysteine 3718–cysteine 3750, and cysteine 3729–cysteine 3735. N-linked (GlcNAc...) asparagine glycosylation is found at asparagine 3823 and asparagine 3869. 4 consecutive TSP type-1 domains span residues 3878–3934, 3951–4004, 4018–4074, and 4076–4131; these read DGGF…PECP, EEGF…PLCS, NCSW…QACK, and DGAW…QPCD. Intrachain disulfides connect cysteine 3890–cysteine 3928, cysteine 3894–cysteine 3933, cysteine 3906–cysteine 3918, cysteine 3963–cysteine 3998, cysteine 3967–cysteine 4003, and cysteine 3982–cysteine 3988. Residues 3932-3951 are disordered; that stretch reads ECPAVPTTEPGPGVAGAEEE. The N-linked (GlcNAc...) asparagine glycan is linked to asparagine 4018. 6 cysteine pairs are disulfide-bonded: cysteine 4019/cysteine 4055, cysteine 4030/cysteine 4034, cysteine 4068/cysteine 4073, cysteine 4088/cysteine 4125, cysteine 4092/cysteine 4130, and cysteine 4103/cysteine 4115. A TIL 9 domain is found at 4134–4189; it reads CPPGMALVTCANHCPRHCGDLQEGIVCREEEHCEPGCRCPNGTLEQDGGCVPLAHC. Asparagine 4174 and asparagine 4211 each carry an N-linked (GlcNAc...) asparagine glycan. TSP type-1 domains are found at residues 4230 to 4282, 4322 to 4384, and 4386 to 4433; these read RCPW…GPCP, GAEH…RPCP, and ECSW…SGCS. Cystine bridges form between cysteine 4231–cysteine 4266, cysteine 4242–cysteine 4246, and cysteine 4276–cysteine 4281. A glycan (N-linked (GlcNAc...) asparagine) is linked at asparagine 4362. Cystine bridges form between cysteine 4387–cysteine 4417, cysteine 4398–cysteine 4400, and cysteine 4427–cysteine 4432. N-linked (GlcNAc...) asparagine glycosylation occurs at asparagine 4428. Residues 4437-4492 form the TIL 10 domain; that stretch reads CEPPFEFQPCSPPCARLCSTLQHPELCPAQSHCLPGCFCPQGLLEQRSACVPPEQC. A glycan (N-linked (GlcNAc...) asparagine) is linked at asparagine 4498. TSP type-1 domains lie at 4537–4608 and 4610–4662; these read LPLS…DICQ and LCLW…AVCP. 6 cysteine pairs are disulfide-bonded: cysteine 4548–cysteine 4601, cysteine 4551–cysteine 4607, cysteine 4575–cysteine 4591, cysteine 4611–cysteine 4646, cysteine 4622–cysteine 4626, and cysteine 4656–cysteine 4661. Residues 4675 to 4722 form the TIL 11 domain; the sequence is TTCANSCPRACADLWQHVECVQGGCKPGCRCPQGQLLQDGLCVPTAQC. 3 N-linked (GlcNAc...) asparagine glycosylation sites follow: asparagine 4730, asparagine 4747, and asparagine 4752. 2 consecutive TSP type-1 domains span residues 4762–4815 and 4817–4869; these read CPSY…QPCP and GCQL…HNCT. 6 cysteine pairs are disulfide-bonded: cysteine 4774–cysteine 4809, cysteine 4778–cysteine 4814, cysteine 4789–cysteine 4798, cysteine 4818–cysteine 4852, cysteine 4829–cysteine 4833, and cysteine 4863–cysteine 4868. Asparagine 4867 is a glycosylation site (N-linked (GlcNAc...) asparagine). Positions 4872–4926 constitute a TIL 12 domain; that stretch reads CPRSQVHRECANACPHACADLRPQTQCLPQPCQPGCACPPGQVLQDGACVPPEEC. Residues asparagine 4939 and asparagine 4970 are each glycosylated (N-linked (GlcNAc...) asparagine). Positions 4979 to 5033 constitute a TSP type-1 27 domain; the sequence is DCLWSPWSPWSPCSVTCGMGERLSHRHPLRQRLYEGAECLGPPVRRAACHLPDCA. Disulfide bonds link cysteine 4980-cysteine 5017, cysteine 4991-cysteine 4995, and cysteine 5027-cysteine 5032. 3 N-linked (GlcNAc...) asparagine glycosylation sites follow: asparagine 5081, asparagine 5122, and asparagine 5169. The VWFC 7 domain occupies 5092–5150; that stretch reads CECLHQGQLHQPGSEWQEQCARCRCVDGKANCTDGCTPLSCPEGEVKVREPGRCCPVCR. 4 disulfides stabilise this stretch: cysteine 5161–cysteine 5209, cysteine 5175–cysteine 5226, cysteine 5185–cysteine 5242, and cysteine 5189–cysteine 5244. The 88-residue stretch at 5161–5248 folds into the CTCK domain; sequence CRRFTELRNI…IHSCECSSCQ (88 aa).

This sequence belongs to the thrombospondin family.

It localises to the secreted. It is found in the extracellular space. Functionally, involved in the modulation of neuronal aggregation. May be involved in developmental events during the formation of the central nervous system. This Gallus gallus (Chicken) protein is SCO-spondin (SSPO).